The following is a 148-amino-acid chain: Deoxyuridine 5'-triphosphate nucleotidohydrolase (148 aa).

Residues 68-70 (RSG), Asn81, 85-87 (TID), and Lys95 each bind substrate.

Belongs to the dUTPase family. It depends on Mg(2+) as a cofactor.

It carries out the reaction dUTP + H2O = dUMP + diphosphate + H(+). It functions in the pathway pyrimidine metabolism; dUMP biosynthesis; dUMP from dCTP (dUTP route): step 2/2. In terms of biological role, this enzyme is involved in nucleotide metabolism: it produces dUMP, the immediate precursor of thymidine nucleotides and it decreases the intracellular concentration of dUTP so that uracil cannot be incorporated into DNA. The sequence is that of Deoxyuridine 5'-triphosphate nucleotidohydrolase from Rickettsia rickettsii (strain Iowa).